The following is a 445-amino-acid chain: ATP synthase subunit b-delta (445 aa).

The interval methionine 1 to valine 168 is ATP synthase subunit b. The chain crosses the membrane as a helical span at residues phenylalanine 4–proline 24. The segment at alanine 169–aspartate 445 is ATP synthase subunit delta.

In the N-terminal section; belongs to the ATPase B chain family. This sequence in the C-terminal section; belongs to the ATPase delta chain family. As to quaternary structure, F-type ATPases have 2 components, F(1) - the catalytic core - and F(0) - the membrane proton channel. F(1) has five subunits: alpha(3), beta(3), gamma(1), delta(1), epsilon(1). F(0) has three main subunits: a(1), b(2) and c(10-14). The alpha and beta chains form an alternating ring which encloses part of the gamma chain. F(1) is attached to F(0) by a central stalk formed by the gamma and epsilon chains, while a peripheral stalk is formed by the delta and b chains.

It is found in the cell membrane. F(1)F(0) ATP synthase produces ATP from ADP in the presence of a proton or sodium gradient. F-type ATPases consist of two structural domains, F(1) containing the extramembraneous catalytic core and F(0) containing the membrane proton channel, linked together by a central stalk and a peripheral stalk. During catalysis, ATP synthesis in the catalytic domain of F(1) is coupled via a rotary mechanism of the central stalk subunits to proton translocation. Functionally, this fusion protein includes a component of the F(0) channel (subunit b) and of the F(1) subunit (subunit delta). Two copies of subunit b and one of delta together form the peripheral 'stator' stalk which links F(1) to F(0). In Mycobacterium ulcerans (strain Agy99), this protein is ATP synthase subunit b-delta (atpFH).